A 71-amino-acid polypeptide reads, in one-letter code: uncharacterized protein (71 aa).

Positions Met1–Lys10 are enriched in basic residues. Residues Met1–Asn20 are disordered. A helical transmembrane segment spans residues Leu21–Ile43.

The protein localises to the membrane. This is an uncharacterized protein from Saccharomyces cerevisiae (strain ATCC 204508 / S288c) (Baker's yeast).